A 227-amino-acid chain; its full sequence is Ribosomal RNA small subunit methyltransferase G (227 aa).

S-adenosyl-L-methionine is bound by residues glycine 69, phenylalanine 74, 119 to 120, and arginine 134; that span reads VE.

The protein belongs to the methyltransferase superfamily. RNA methyltransferase RsmG family.

The protein localises to the cytoplasm. Functionally, specifically methylates the N7 position of a guanine in 16S rRNA. The polypeptide is Ribosomal RNA small subunit methyltransferase G (Mycoplasmopsis pulmonis (strain UAB CTIP) (Mycoplasma pulmonis)).